Here is a 210-residue protein sequence, read N- to C-terminus: Thymidylate kinase (210 aa).

Residue 10-17 coordinates ATP; sequence GPEGAGKS.

Belongs to the thymidylate kinase family.

The catalysed reaction is dTMP + ATP = dTDP + ADP. Its function is as follows. Phosphorylation of dTMP to form dTDP in both de novo and salvage pathways of dTTP synthesis. This chain is Thymidylate kinase, found in Pseudomonas syringae pv. syringae (strain B728a).